Consider the following 435-residue polypeptide: Putrescine transporter PotE (435 aa).

A run of 12 helical transmembrane segments spans residues I8–M28, I39–A59, L95–G115, I117–L137, I148–W168, V185–L205, I224–I244, V275–I295, A320–I340, L354–L374, T386–G406, and A409–Y429.

Belongs to the amino acid-polyamine-organocation (APC) superfamily. Basic amino acid/polyamine antiporter (APA) (TC 2.A.3.2) family.

The protein resides in the cell inner membrane. It catalyses the reaction putrescine(in) + H(+)(in) = putrescine(out) + H(+)(out). The catalysed reaction is putrescine(in) + L-ornithine(out) = putrescine(out) + L-ornithine(in). Functionally, catalyzes both the uptake and excretion of putrescine. The uptake of putrescine is dependent on the membrane potential and the excretion involves putrescine-ornithine antiporter activity. The chain is Putrescine transporter PotE from Haemophilus influenzae (strain ATCC 51907 / DSM 11121 / KW20 / Rd).